A 500-amino-acid chain; its full sequence is Aspartyl/glutamyl-tRNA(Asn/Gln) amidotransferase subunit B (500 aa).

Belongs to the GatB/GatE family. GatB subfamily. As to quaternary structure, heterotrimer of A, B and C subunits.

The catalysed reaction is L-glutamyl-tRNA(Gln) + L-glutamine + ATP + H2O = L-glutaminyl-tRNA(Gln) + L-glutamate + ADP + phosphate + H(+). It carries out the reaction L-aspartyl-tRNA(Asn) + L-glutamine + ATP + H2O = L-asparaginyl-tRNA(Asn) + L-glutamate + ADP + phosphate + 2 H(+). Allows the formation of correctly charged Asn-tRNA(Asn) or Gln-tRNA(Gln) through the transamidation of misacylated Asp-tRNA(Asn) or Glu-tRNA(Gln) in organisms which lack either or both of asparaginyl-tRNA or glutaminyl-tRNA synthetases. The reaction takes place in the presence of glutamine and ATP through an activated phospho-Asp-tRNA(Asn) or phospho-Glu-tRNA(Gln). This chain is Aspartyl/glutamyl-tRNA(Asn/Gln) amidotransferase subunit B, found in Clavibacter michiganensis subsp. michiganensis (strain NCPPB 382).